We begin with the raw amino-acid sequence, 261 residues long: Phosphatidylglycerol--prolipoprotein diacylglyceryl transferase (261 aa).

Helical transmembrane passes span 17–37 (FGIHWYGLMYLIGFLAFLWLG), 60–80 (ALFYGALGVILGGRLGYALFY), 92–112 (ILFLWQGGMSFHGGFLGVMVA), and 121–141 (GLTFFGIMDFVAPLVPVGLGA). Residue arginine 143 coordinates a 1,2-diacyl-sn-glycero-3-phospho-(1'-sn-glycerol). The next 3 membrane-spanning stretches (helical) occupy residues 175–195 (PSQLYEFLLEGVALFILLWWY), 203–223 (GSVSALFLIGYGSFRFLVEFT), and 237–257 (LSMGQWLSLPMVIAGVWLLIV).

Belongs to the Lgt family.

The protein resides in the cell inner membrane. It carries out the reaction L-cysteinyl-[prolipoprotein] + a 1,2-diacyl-sn-glycero-3-phospho-(1'-sn-glycerol) = an S-1,2-diacyl-sn-glyceryl-L-cysteinyl-[prolipoprotein] + sn-glycerol 1-phosphate + H(+). Its pathway is protein modification; lipoprotein biosynthesis (diacylglyceryl transfer). Catalyzes the transfer of the diacylglyceryl group from phosphatidylglycerol to the sulfhydryl group of the N-terminal cysteine of a prolipoprotein, the first step in the formation of mature lipoproteins. The polypeptide is Phosphatidylglycerol--prolipoprotein diacylglyceryl transferase (Methylobacillus flagellatus (strain ATCC 51484 / DSM 6875 / VKM B-1610 / KT)).